Reading from the N-terminus, the 127-residue chain is Chorismate mutase AroH (127 aa).

Residues 3–121 enclose the Chorismate mutase aroH-type domain; sequence IRGIRGATTV…VVVLRPDLSL (119 aa). Prephenate is bound by residues R7, 74 to 78, R90, and Y108; that span reads TCMQE.

Homotrimer.

It is found in the cytoplasm. It carries out the reaction chorismate = prephenate. It functions in the pathway metabolic intermediate biosynthesis; prephenate biosynthesis; prephenate from chorismate: step 1/1. Functionally, catalyzes the Claisen rearrangement of chorismate to prephenate. Probably involved in the aromatic amino acid biosynthesis. This chain is Chorismate mutase AroH, found in Bacillus subtilis (strain 168).